Consider the following 212-residue polypeptide: dTTP/UTP pyrophosphatase (212 aa).

Residue aspartate 88 is the Proton acceptor of the active site.

This sequence belongs to the Maf family. YhdE subfamily. It depends on a divalent metal cation as a cofactor.

It localises to the cytoplasm. It carries out the reaction dTTP + H2O = dTMP + diphosphate + H(+). The enzyme catalyses UTP + H2O = UMP + diphosphate + H(+). Nucleoside triphosphate pyrophosphatase that hydrolyzes dTTP and UTP. May have a dual role in cell division arrest and in preventing the incorporation of modified nucleotides into cellular nucleic acids. This chain is dTTP/UTP pyrophosphatase, found in Colwellia psychrerythraea (strain 34H / ATCC BAA-681) (Vibrio psychroerythus).